The following is a 493-amino-acid chain: Probable malate:quinone oxidoreductase (493 aa).

It belongs to the MQO family. The cofactor is FAD.

The enzyme catalyses (S)-malate + a quinone = a quinol + oxaloacetate. The protein operates within carbohydrate metabolism; tricarboxylic acid cycle; oxaloacetate from (S)-malate (quinone route): step 1/1. The chain is Probable malate:quinone oxidoreductase from Mycobacterium marinum (strain ATCC BAA-535 / M).